Consider the following 371-residue polypeptide: GDP-mannose transporter (371 aa).

The Cytoplasmic portion of the chain corresponds to 1–51 (MGVISFYLIGQLLYLIRKKYTTTYRQQQQHQYNMDSKHSTSSSSSGSLATR). The chain crosses the membrane as a helical span at residues 52 to 72 (ISNSGPISIAAYCLSSILMTV). Residues 73 to 80 (TNKYVLSG) lie on the Lumenal side of the membrane. Residues 81-101 (FSFNLNFFLLAVQSIVCIVTI) form a helical membrane-spanning segment. Residues 102 to 121 (GSLKSLNIITYRQFNKDEAK) are Cytoplasmic-facing. The chain crosses the membrane as a helical span at residues 122-138 (KWSPIAFLLVAMIYTSS). Residues 139 to 145 (KALQYLS) are Lumenal-facing. A helical membrane pass occupies residues 146–162 (IPVYTIFKNLTIILIAY). At 163–171 (GEVIWFGGK) the chain is on the cytoplasmic side. The chain crosses the membrane as a helical span at residues 172–192 (VTTMALSSFLLMVLSSVIAYY). Over 193 to 206 (GDNAAVKSHDDAFA) the chain is Lumenal. Residues 207–227 (LYLGYFWMLTNCFASAAFVLI) traverse the membrane as a helical segment. Residues 228–241 (MRKRIKLTNFKDFD) are Cytoplasmic-facing. Residues 242–262 (TMYYNNLLSIPILLICSFIFE) traverse the membrane as a helical segment. Topologically, residues 263–281 (DWSSANVSLNFPADNRVTT) are lumenal. The N-linked (GlcNAc...) asparagine glycan is linked to asparagine 268. Residues 282–302 (ITAMILSGASSVGISYCSAWC) form a helical membrane-spanning segment. The Cytoplasmic segment spans residues 303 to 309 (VRVTSST). The helical transmembrane segment at 310 to 329 (TYSMVGALNKLPIALSGLIF) threads the bilayer. Over 330–332 (FEA) the chain is Lumenal. Residues 333–355 (AVNFWSVSSIFVGFGAGLVYAVA) form a helical membrane-spanning segment. The Cytoplasmic portion of the chain corresponds to 356–371 (KQKQQKEQSQQLPTTK).

Belongs to the TPT transporter family. SLC35D subfamily. In terms of assembly, homooligomer.

It is found in the golgi apparatus membrane. The protein localises to the cytoplasmic vesicle membrane. The protein resides in the endoplasmic reticulum membrane. In terms of biological role, involved in the import of GDP-mannose from the cytoplasm into the Golgi lumen. Involved in hyphal formation. The protein is GDP-mannose transporter (VRG4) of Candida albicans (strain SC5314 / ATCC MYA-2876) (Yeast).